The chain runs to 88 residues: CRISPR-associated endoribonuclease Cas2 2 (88 aa).

Residue aspartate 8 coordinates Mg(2+).

This sequence belongs to the CRISPR-associated endoribonuclease Cas2 protein family. Homodimer, forms a heterotetramer with a Cas1 homodimer. Requires Mg(2+) as cofactor.

Its function is as follows. CRISPR (clustered regularly interspaced short palindromic repeat), is an adaptive immune system that provides protection against mobile genetic elements (viruses, transposable elements and conjugative plasmids). CRISPR clusters contain sequences complementary to antecedent mobile elements and target invading nucleic acids. CRISPR clusters are transcribed and processed into CRISPR RNA (crRNA). Functions as a ssRNA-specific endoribonuclease. Involved in the integration of spacer DNA into the CRISPR cassette. This is CRISPR-associated endoribonuclease Cas2 2 (cas22) from Saccharolobus solfataricus (strain ATCC 35092 / DSM 1617 / JCM 11322 / P2) (Sulfolobus solfataricus).